The following is a 216-amino-acid chain: MSKLQSEAVREAITTITGKSEAKKRNFVETIELQIGLKNYDPQKDKRFSGSVKLPHIPRPKMKICMLGDAQHVEEAEKMGLENMDVESLKKLNKNKKLVKKLAKKYHAFLASESVIKQIPRLLGPGLNKAGKFPTLVSHQESLESKVNETKATVKFQLKKVLCMGVAVGNLSMEEKQIFQNVQMSVNFLVSLLKKNWQNVRCLYLKSTMGPPQRIF.

It belongs to the universal ribosomal protein uL1 family. As to quaternary structure, interacts with the GTPase NUG2.

The protein is Large ribosomal subunit protein uL1z (RPL10AA) of Arabidopsis thaliana (Mouse-ear cress).